Here is a 241-residue protein sequence, read N- to C-terminus: tRNA pseudouridine synthase B (241 aa).

Asp45 serves as the catalytic Nucleophile.

This sequence belongs to the pseudouridine synthase TruB family. Type 1 subfamily.

The enzyme catalyses uridine(55) in tRNA = pseudouridine(55) in tRNA. In terms of biological role, responsible for synthesis of pseudouridine from uracil-55 in the psi GC loop of transfer RNAs. This Chlamydia muridarum (strain MoPn / Nigg) protein is tRNA pseudouridine synthase B.